A 229-amino-acid polypeptide reads, in one-letter code: Glutathione S-transferase 1 (229 aa).

The GST N-terminal domain maps to S2–A83. Glutathione contacts are provided by residues H41–K42, K54–M55, and E67–S68. One can recognise a GST C-terminal domain in the interval G93 to F223.

This sequence belongs to the GST superfamily. Phi family.

It catalyses the reaction RX + glutathione = an S-substituted glutathione + a halide anion + H(+). In terms of biological role, conjugation of reduced glutathione to a wide number of exogenous and endogenous hydrophobic electrophiles. This chain is Glutathione S-transferase 1 (GSTA1), found in Triticum aestivum (Wheat).